The chain runs to 322 residues: Ig gamma-2A chain C region (322 aa).

3 consecutive Ig-like domains span residues 6-98 (PSVY…KKIV), 115-212 (VFIF…KSIS), and 221-317 (PQVY…KSLS). Cystine bridges form between Cys27–Cys82, Cys136–Cys196, and Cys242–Cys300. N-linked (GlcNAc...) asparagine glycosylation occurs at Asn172.

The sequence is that of Ig gamma-2A chain C region (Igg-2a) from Rattus norvegicus (Rat).